The sequence spans 393 residues: MTNSNRIKLTWISFLSYALTGALVIVTGMVMGNIAEYFNLPVSSMSNTFTFLNAGILISIFLNAWLMEIIPLKTQLRFGFVLMVLAVAGLMLSHSLALFSAAMFVLGLVSGITMSIGTFLITQMYEGRQRGSRLLFTDSFFSMAGMIFPMVAAYLLARSIEWYWVYACIGLVYVAIFILTFGCEFPALGKHAPKTETPVVKEKWGIGVLFLSIAALCYILGQLGFISWVPEYAKGLGMSLNDAGTLVSDFWMSYMFGMWAFSFILRFFDLQRILTVLAGLAAVLMYLFIKAQPEHMAWFILTLGFFSSAIYTSIITLGSQQTKVPSPKLVNFVLTCGTIGTMLTFVVTGPIVAHSGPQAALLTANGLYAVVFVMCFILGFVTRHRQHNVPAAH.

12 consecutive transmembrane segments (helical) span residues 11–31 (WISF…GMVM), 51–71 (FLNA…EIIP), 78–98 (FGFV…SLAL), 101–121 (AAMF…TFLI), 134–154 (LLFT…VAAY), 162–182 (WYWV…LTFG), 206–226 (IGVL…LGFI), 245–265 (TLVS…SFIL), 273–293 (ILTV…KAQP), 297–317 (AWFI…IITL), 332–352 (FVLT…GPIV), and 361–381 (LLTA…LGFV).

The protein belongs to the major facilitator superfamily. TsgA family.

The protein localises to the cell inner membrane. The polypeptide is Protein TsgA homolog (Citrobacter koseri (strain ATCC BAA-895 / CDC 4225-83 / SGSC4696)).